A 334-amino-acid chain; its full sequence is 7,8-didemethyl-8-hydroxy-5-deazariboflavin synthase (334 aa).

In terms of domain architecture, Radical SAM core spans 2–248 (VSYSKNVFVP…PDVPVQVPPN (247 aa)). Residues cysteine 16, cysteine 20, and cysteine 23 each coordinate [4Fe-4S] cluster.

The protein belongs to the radical SAM superfamily. CofG family. Consists of two subunits, CofG and CofH. Requires [4Fe-4S] cluster as cofactor.

It catalyses the reaction 5-amino-5-(4-hydroxybenzyl)-6-(D-ribitylimino)-5,6-dihydrouracil + S-adenosyl-L-methionine = 7,8-didemethyl-8-hydroxy-5-deazariboflavin + 5'-deoxyadenosine + L-methionine + NH4(+) + H(+). The protein operates within cofactor biosynthesis; coenzyme F0 biosynthesis. Functionally, catalyzes the radical-mediated synthesis of 7,8-didemethyl-8-hydroxy-5-deazariboflavin from 5-amino-5-(4-hydroxybenzyl)-6-(D-ribitylimino)-5,6-dihydrouracil. This chain is 7,8-didemethyl-8-hydroxy-5-deazariboflavin synthase, found in Methanopyrus kandleri (strain AV19 / DSM 6324 / JCM 9639 / NBRC 100938).